We begin with the raw amino-acid sequence, 163 residues long: Sperm acrosome membrane-associated protein 3 (163 aa).

An N-terminal signal peptide occupies residues 1–35 (MEAGSWAPRRWPRPPGIVLLALASVLSSLLSSGQA). The region spanning 36 to 163 (RVYSRCELAR…LSDWVDGCEL (128 aa)) is the C-type lysozyme domain. Intrachain disulfides connect Cys41-Cys161, Cys65-Cys149, Cys99-Cys114, and Cys110-Cys128.

This sequence belongs to the glycosyl hydrolase 22 family. In terms of assembly, interacts with ASTL.

The protein resides in the secreted. Sperm surface membrane protein that may be involved in sperm-egg plasma membrane adhesion and fusion during fertilization. It could be a potential receptor for the egg oligosaccharide residue N-acetylglucosamine, which is present in the extracellular matrix over the egg plasma membrane. The processed form has no detectable bacteriolytic activity in vitro. The protein is Sperm acrosome membrane-associated protein 3 (SPACA3) of Bos taurus (Bovine).